The following is a 104-amino-acid chain: Large ribosomal subunit protein uL24 (104 aa).

It belongs to the universal ribosomal protein uL24 family. In terms of assembly, part of the 50S ribosomal subunit.

One of two assembly initiator proteins, it binds directly to the 5'-end of the 23S rRNA, where it nucleates assembly of the 50S subunit. Its function is as follows. One of the proteins that surrounds the polypeptide exit tunnel on the outside of the subunit. The protein is Large ribosomal subunit protein uL24 of Yersinia enterocolitica serotype O:8 / biotype 1B (strain NCTC 13174 / 8081).